We begin with the raw amino-acid sequence, 337 residues long: Adenine deaminase (337 aa).

3 residues coordinate Zn(2+): H14, H16, and H194. E197 serves as the catalytic Proton donor. D275 is a binding site for Zn(2+). Residue D276 coordinates substrate.

The protein belongs to the metallo-dependent hydrolases superfamily. Adenosine and AMP deaminases family. Adenine deaminase type 2 subfamily. It depends on Zn(2+) as a cofactor.

The catalysed reaction is adenine + H2O + H(+) = hypoxanthine + NH4(+). Its function is as follows. Catalyzes the hydrolytic deamination of adenine to hypoxanthine. Plays an important role in the purine salvage pathway and in nitrogen catabolism. This chain is Adenine deaminase, found in Vibrio parahaemolyticus serotype O3:K6 (strain RIMD 2210633).